A 613-amino-acid polypeptide reads, in one-letter code: RNA polymerase sigma factor RpoD (613 aa).

A sigma-70 factor domain-1 region spans residues 2 to 80 (EQNPQSQLKL…TADEDAAEAA (79 aa)). The segment at 176–213 (PTATHVGSELSQEDLDDDEDEDEEDGDDDSADDDNSID) is disordered. Residues 186-212 (SQEDLDDDEDEDEEDGDDDSADDDNSI) are compositionally biased toward acidic residues. A sigma-70 factor domain-2 region spans residues 379–449 (MVEANLRLVI…TRSIADQART (71 aa)). An Interaction with polymerase core subunit RpoC motif is present at residues 403 to 406 (DLIQ). The segment at 458 to 534 (ETINKLNRIS…DTTLELPLDS (77 aa)) is sigma-70 factor domain-3. Residues 547–600 (VLAGLTAREAKVLRMRFGIDMNTDYTLEEVGKQFDVTRERIRQIEAKALRKLRH) are sigma-70 factor domain-4. A DNA-binding region (H-T-H motif) is located at residues 573–592 (LEEVGKQFDVTRERIRQIEA). The interval 584-599 (RERIRQIEAKALRKLR) is interaction with anti-sigma factors.

The protein belongs to the sigma-70 factor family. RpoD/SigA subfamily. Interacts transiently with the RNA polymerase catalytic core formed by RpoA, RpoB, RpoC and RpoZ (2 alpha, 1 beta, 1 beta' and 1 omega subunit) to form the RNA polymerase holoenzyme that can initiate transcription. Identified in a complex containing RpoD, the RNA polymerase subunits RpoA, RpoB and RpoZ, CRP and DNA. Interacts with Rsd; this prevents interaction with the RNA polymerase catalytic core and with promoter DNA, and as a consequence, promotes transcription from promoters that require alternative sigma factors. Interacts with phage T4 AsiA; this interferes with binding to DNA and to the RNA polymerase. In terms of assembly, (Microbial infection) Interacts with Escherichia phage lambda antitermination protein Q.

The protein localises to the cytoplasm. Sigma factors are initiation factors that promote the attachment of RNA polymerase to specific initiation sites and are then released. This sigma factor is the primary sigma factor during exponential growth. Preferentially transcribes genes associated with fast growth, such as ribosomal operons, other protein-synthesis related genes, rRNA- and tRNA-encoding genes and prfB. This Escherichia coli (strain K12) protein is RNA polymerase sigma factor RpoD.